A 114-amino-acid polypeptide reads, in one-letter code: TYRO protein tyrosine kinase-binding protein (114 aa).

A signal peptide spans 1–27 (MGAPEPSWCFLFLPVLLTVGGLSPVQA). The Extracellular segment spans residues 28-42 (QSDNYPGCECSSVSP). Residues 43–63 (GVLAGIVLGDLVLTLLIALAV) form a helical membrane-spanning segment. Aspartate 52 contributes to the Ca(2+) binding site. Over 64 to 114 (YSLGRLVSRGRGTADGTRKQHMAETESPYQELQGQRPEVYSDLNTQRQYYR) the chain is Cytoplasmic. The segment at 72–114 (RGRGTADGTRKQHMAETESPYQELQGQRPEVYSDLNTQRQYYR) is disordered. Residues 81–109 (RKQHMAETESPYQELQGQRPEVYSDLNTQ) form the ITAM domain. A phosphotyrosine mark is found at tyrosine 92 and tyrosine 103. Residues 105–114 (DLNTQRQYYR) are compositionally biased toward polar residues.

This sequence belongs to the TYROBP family. In terms of assembly, homodimer; disulfide-linked. Homotrimer; disulfide-linked. Homotetramer; disulfide-linked. Homotrimers and homotetramers form when low levels of partner receptors are available and is competitive with assembly with interacting receptors. They may represent alternative oligomerization states or may be intermediates in the receptor assembly process. Binding of a metal cation aids in homooligomerization through coordination of the metal ion by the subunits of the oligomer. Interacts with TREM1. Interacts with TREM2. Interacts with CLECSF5. Interacts with CD300LB and CD300C2. Interacts with CD300E. Interacts (via ITAM domain) with SYK (via SH2 domains); activates SYK mediating neutrophils and macrophages integrin-mediated activation. Interacts with KLRC2. Interacts with CD300H. Interacts with KLRD1. Interacts with SIGLEC1. Post-translationally, following ligand binding by associated receptors, tyrosine phosphorylated in the ITAM domain which leads to activation of additional tyrosine kinases and subsequent cell activation.

The protein resides in the cell membrane. Its function is as follows. Adapter protein which non-covalently associates with activating receptors found on the surface of a variety of immune cells to mediate signaling and cell activation following ligand binding by the receptors. TYROBP is tyrosine-phosphorylated in the ITAM domain following ligand binding by the associated receptors which leads to activation of additional tyrosine kinases and subsequent cell activation. Also has an inhibitory role in some cells. Non-covalently associates with activating receptors of the CD300 family to mediate cell activation. Also mediates cell activation through association with activating receptors of the CD200R family. Required for neutrophil activation mediated by integrin. Required for the activation of myeloid cells mediated by the CLEC5A/MDL1 receptor. Associates with natural killer (NK) cell receptors such as the KLRD1/KLRC2 heterodimer to mediate NK cell activation. Associates with TREM1 to mediate activation of neutrophils and monocytes. Associates with TREM2 on monocyte-derived dendritic cells to mediate up-regulation of chemokine receptor CCR7 and dendritic cell maturation and survival. PAssociation with TREM2 mediates cytokine-induced formation of multinucleated giant cells which are formed by the fusion of macrophages. Stabilizes the TREM2 C-terminal fragment (TREM2-CTF) produced by TREM2 ectodomain shedding which suppresses the release of pro-inflammatory cytokines. In microglia, required with TREM2 for phagocytosis of apoptotic neurons. Required with ITGAM/CD11B in microglia to control production of microglial superoxide ions which promote the neuronal apoptosis that occurs during brain development. Promotes pro-inflammatory responses in microglia following nerve injury which accelerates degeneration of injured neurons. ositively regulates the expression of the IRAK3/IRAK-M kinase and IL10 production by liver dendritic cells and inhibits their T cell allosimulatory ability. Negatively regulates B cell proliferation. Required for CSF1-mediated osteoclast cytoskeletal organization. Positively regulates multinucleation during osteoclast development. This is TYRO protein tyrosine kinase-binding protein from Rattus norvegicus (Rat).